Here is a 445-residue protein sequence, read N- to C-terminus: Ribosomal protein uS12 methylthiotransferase RimO (445 aa).

The region spanning 4–119 (IKVALVSLGC…LLESIKVFLK (116 aa)) is the MTTase N-terminal domain. Positions 13, 48, 82, 156, 160, and 163 each coordinate [4Fe-4S] cluster. Residues 142-372 (TTPTYTAYVR…MILQQSISKD (231 aa)) enclose the Radical SAM core domain. A TRAM domain is found at 375–441 (KEKIGKTYEV…EYDLIGVVYN (67 aa)).

This sequence belongs to the methylthiotransferase family. RimO subfamily. The cofactor is [4Fe-4S] cluster.

It is found in the cytoplasm. The enzyme catalyses L-aspartate(89)-[ribosomal protein uS12]-hydrogen + (sulfur carrier)-SH + AH2 + 2 S-adenosyl-L-methionine = 3-methylsulfanyl-L-aspartate(89)-[ribosomal protein uS12]-hydrogen + (sulfur carrier)-H + 5'-deoxyadenosine + L-methionine + A + S-adenosyl-L-homocysteine + 2 H(+). In terms of biological role, catalyzes the methylthiolation of an aspartic acid residue of ribosomal protein uS12. This chain is Ribosomal protein uS12 methylthiotransferase RimO, found in Clostridium botulinum (strain ATCC 19397 / Type A).